Reading from the N-terminus, the 262-residue chain is Hemin import ATP-binding protein HmuV (262 aa).

In terms of domain architecture, ABC transporter spans Ile-2–Arg-241. Gly-34–Thr-41 contributes to the ATP binding site.

It belongs to the ABC transporter superfamily. Heme (hemin) importer (TC 3.A.1.14.5) family. In terms of assembly, the complex is composed of two ATP-binding proteins (HmuV), two transmembrane proteins (HmuU) and a solute-binding protein (HmuT).

The protein localises to the cell inner membrane. Its function is as follows. Part of the ABC transporter complex HmuTUV involved in hemin import. Responsible for energy coupling to the transport system. In Rhizobium meliloti (strain 1021) (Ensifer meliloti), this protein is Hemin import ATP-binding protein HmuV.